Reading from the N-terminus, the 162-residue chain is Ribonuclease P protein component (162 aa).

A disordered region spans residues 1 to 67 (MDEKDLAAQP…GGKLVSLKGD (67 aa)). Residues 21–31 (GPHEDPRRQEG) show a composition bias toward basic and acidic residues.

The protein belongs to the RnpA family. As to quaternary structure, consists of a catalytic RNA component (M1 or rnpB) and a protein subunit.

The catalysed reaction is Endonucleolytic cleavage of RNA, removing 5'-extranucleotides from tRNA precursor.. RNaseP catalyzes the removal of the 5'-leader sequence from pre-tRNA to produce the mature 5'-terminus. It can also cleave other RNA substrates such as 4.5S RNA. The protein component plays an auxiliary but essential role in vivo by binding to the 5'-leader sequence and broadening the substrate specificity of the ribozyme. The chain is Ribonuclease P protein component from Thermus brockianus.